A 506-amino-acid polypeptide reads, in one-letter code: 26S proteasome non-ATPase regulatory subunit 5 (506 aa).

Belongs to the proteasome subunit S5B/HSM3 family. In terms of assembly, interacts with PI31; this interaction is increased by PI31 ADP-ribosylation. Interacts with Rpt2.

Acts as a chaperone during the assembly of the 26S proteasome. In Drosophila melanogaster (Fruit fly), this protein is 26S proteasome non-ATPase regulatory subunit 5.